We begin with the raw amino-acid sequence, 323 residues long: Fructose-1,6-bisphosphatase class 1 (323 aa).

Mg(2+) is bound by residues Glu84, Asp103, Leu105, and Asp106. Substrate-binding positions include 106-109 (DGSS), Asn198, and Lys264. Glu270 provides a ligand contact to Mg(2+).

Belongs to the FBPase class 1 family. Homotetramer. Mg(2+) serves as cofactor.

It is found in the cytoplasm. The catalysed reaction is beta-D-fructose 1,6-bisphosphate + H2O = beta-D-fructose 6-phosphate + phosphate. Its pathway is carbohydrate biosynthesis; gluconeogenesis. The chain is Fructose-1,6-bisphosphatase class 1 from Cellvibrio japonicus (strain Ueda107) (Pseudomonas fluorescens subsp. cellulosa).